Consider the following 407-residue polypeptide: Methylthioribose-1-phosphate isomerase (407 aa).

The active-site Proton donor is Asp275.

It belongs to the eIF-2B alpha/beta/delta subunits family. MtnA subfamily.

It is found in the cytoplasm. The protein resides in the nucleus. The catalysed reaction is 5-(methylsulfanyl)-alpha-D-ribose 1-phosphate = 5-(methylsulfanyl)-D-ribulose 1-phosphate. The protein operates within amino-acid biosynthesis; L-methionine biosynthesis via salvage pathway; L-methionine from S-methyl-5-thio-alpha-D-ribose 1-phosphate: step 1/6. Functionally, catalyzes the interconversion of methylthioribose-1-phosphate (MTR-1-P) into methylthioribulose-1-phosphate (MTRu-1-P). In Kluyveromyces lactis (strain ATCC 8585 / CBS 2359 / DSM 70799 / NBRC 1267 / NRRL Y-1140 / WM37) (Yeast), this protein is Methylthioribose-1-phosphate isomerase.